The following is a 405-amino-acid chain: MADVNKVVLAYSGGLDTSVILKWLQDTYNCEVVTFTADLGQGEEVEPARAKAQAMGVKEIYIDDLREEFVRDFVFPMFRANTVYEGEYLLGTSIARPLIAKRLIEIANETGADAISHGATGKGNDQVRFELGAYALKPGVKVIAPWREWDLLSREKLMDYAEKHNIPIERHGKKKSPYSMDANLLHISYEGGVLEDTWTEHEEDMWRWTKSPEDAPNVATYLELTYRNGDIVALDGVEMTPATVLATLNRIGGENGIGRLDIVENRYVGMKSRGCYETPGGTIMLRAHRAIESITLDREVAHLKDELMAKYASLIYTGYWWSPERLMLQQMIDASQVHVNGVVRLKLYKGNVIVTGRKSDDSLFDANIATFEDDAGAYDQADAAGFIKLNALRMRIAANKGRKLF.

Residues A10–S18 and A37 contribute to the ATP site. 2 residues coordinate L-citrulline: Y88 and S93. Residue G118 participates in ATP binding. Residues T120, N124, and D125 each coordinate L-aspartate. L-citrulline is bound at residue N124. Positions 128, 179, 188, 264, and 276 each coordinate L-citrulline.

Belongs to the argininosuccinate synthase family. Type 1 subfamily. Homotetramer.

Its subcellular location is the cytoplasm. The enzyme catalyses L-citrulline + L-aspartate + ATP = 2-(N(omega)-L-arginino)succinate + AMP + diphosphate + H(+). It functions in the pathway amino-acid biosynthesis; L-arginine biosynthesis; L-arginine from L-ornithine and carbamoyl phosphate: step 2/3. This chain is Argininosuccinate synthase, found in Pseudomonas syringae pv. syringae (strain B728a).